Here is a 253-residue protein sequence, read N- to C-terminus: Peptidase inhibitor R3HDML (253 aa).

Positions 1–24 (MPLLPSTVGLAGLLFWAGQAVNAL) are cleaved as a signal peptide. A propeptide spanning residues 25 to 56 (IMPNATPAPAQPESTAMRLLSGLEVPRYRRKR) is cleaved from the precursor. The 141-residue stretch at 67 to 207 (LDYHNHIRAS…HRAAYLVCNY (141 aa)) folds into the SCP domain. A glycan (N-linked (GlcNAc...) asparagine) is linked at N120.

This sequence belongs to the CRISP family.

Its subcellular location is the secreted. In terms of biological role, putative serine protease inhibitor. The chain is Peptidase inhibitor R3HDML (R3HDML) from Homo sapiens (Human).